Reading from the N-terminus, the 350-residue chain is tRNA uridine(34) hydroxylase (350 aa).

The 95-residue stretch at 146–240 (DDPDALFIDM…YARKAREQGL (95 aa)) folds into the Rhodanese domain. Cysteine 200 functions as the Cysteine persulfide intermediate in the catalytic mechanism.

This sequence belongs to the TrhO family.

The enzyme catalyses uridine(34) in tRNA + AH2 + O2 = 5-hydroxyuridine(34) in tRNA + A + H2O. In terms of biological role, catalyzes oxygen-dependent 5-hydroxyuridine (ho5U) modification at position 34 in tRNAs. The sequence is that of tRNA uridine(34) hydroxylase from Shigella sonnei (strain Ss046).